Reading from the N-terminus, the 745-residue chain is Elongation factor G, mitochondrial (745 aa).

The N-terminal 15 residues, methionine 1–arginine 15, are a transit peptide targeting the mitochondrion. Positions aspartate 40–glycine 317 constitute a tr-type G domain. GTP is bound by residues alanine 49–threonine 56, aspartate 116–histidine 120, and asparagine 170–aspartate 173.

Belongs to the TRAFAC class translation factor GTPase superfamily. Classic translation factor GTPase family. EF-G/EF-2 subfamily.

The protein localises to the mitochondrion. It functions in the pathway protein biosynthesis; polypeptide chain elongation. Mitochondrial GTPase that catalyzes the GTP-dependent ribosomal translocation step during translation elongation. During this step, the ribosome changes from the pre-translocational (PRE) to the post-translocational (POST) state as the newly formed A-site-bound peptidyl-tRNA and P-site-bound deacylated tRNA move to the P and E sites, respectively. Catalyzes the coordinated movement of the two tRNA molecules, the mRNA and conformational changes in the ribosome. Essential during development as it acts as a retrograde signal from mitochondria to the nucleus to slow down cell proliferation if mitochondrial energy output is low. The protein is Elongation factor G, mitochondrial (ico) of Drosophila ananassae (Fruit fly).